Reading from the N-terminus, the 307-residue chain is Bifunctional protein FolD (307 aa).

Residues 170 to 172 (GRS), S195, and I236 contribute to the NADP(+) site.

The protein belongs to the tetrahydrofolate dehydrogenase/cyclohydrolase family. In terms of assembly, homodimer.

The enzyme catalyses (6R)-5,10-methylene-5,6,7,8-tetrahydrofolate + NADP(+) = (6R)-5,10-methenyltetrahydrofolate + NADPH. It catalyses the reaction (6R)-5,10-methenyltetrahydrofolate + H2O = (6R)-10-formyltetrahydrofolate + H(+). It participates in one-carbon metabolism; tetrahydrofolate interconversion. Functionally, catalyzes the oxidation of 5,10-methylenetetrahydrofolate to 5,10-methenyltetrahydrofolate and then the hydrolysis of 5,10-methenyltetrahydrofolate to 10-formyltetrahydrofolate. This chain is Bifunctional protein FolD, found in Sinorhizobium fredii (strain NBRC 101917 / NGR234).